Reading from the N-terminus, the 335-residue chain is N-acetylglucosaminyl-phosphatidylinositol de-N-acetylase (335 aa).

The chain crosses the membrane as a helical span at residues Ser-3 to Leu-23. N-linked (GlcNAc...) asparagine glycosylation is found at Asn-128 and Asn-153.

Belongs to the PIGL family.

Its subcellular location is the endoplasmic reticulum membrane. The enzyme catalyses a 6-(N-acetyl-alpha-D-glucosaminyl)-1-(1,2-diacyl-sn-glycero-3-phospho)-1D-myo-inositol + H2O = a 6-(alpha-D-glucosaminyl)-1-(1,2-diacyl-sn-glycero-3-phospho)-1D-myo-inositol + acetate. It functions in the pathway glycolipid biosynthesis; glycosylphosphatidylinositol-anchor biosynthesis. Involved in the second step of GPI biosynthesis. De-N-acetylation of N-acetylglucosaminyl-phosphatidylinositol. The polypeptide is N-acetylglucosaminyl-phosphatidylinositol de-N-acetylase (Arthroderma benhamiae (strain ATCC MYA-4681 / CBS 112371) (Trichophyton mentagrophytes)).